The chain runs to 80 residues: Cell division protein ZapB (80 aa).

Residues 3 to 80 adopt a coiled-coil conformation; it reads LEILEQLEAK…GLLGKMEEVE (78 aa). A disordered region spans residues 41–62; sequence LEQANNGRSEVEQEAQKARDEQ. Residues 49–62 are compositionally biased toward basic and acidic residues; the sequence is SEVEQEAQKARDEQ.

The protein belongs to the ZapB family. As to quaternary structure, homodimer. The ends of the coiled-coil dimer bind to each other, forming polymers. Interacts with FtsZ.

The protein localises to the cytoplasm. Non-essential, abundant cell division factor that is required for proper Z-ring formation. It is recruited early to the divisome by direct interaction with FtsZ, stimulating Z-ring assembly and thereby promoting cell division earlier in the cell cycle. Its recruitment to the Z-ring requires functional FtsA or ZipA. The polypeptide is Cell division protein ZapB (Aliivibrio salmonicida (strain LFI1238) (Vibrio salmonicida (strain LFI1238))).